The following is a 148-amino-acid chain: Hemoglobin subunit beta (148 aa).

Residues 3–148 (XWTDXERHVI…AVAALGKQYH (146 aa)) form the Globin domain. Positions 64 and 93 each coordinate heme b.

It belongs to the globin family. As to quaternary structure, heterotetramer of two alpha chains and two beta chains. As to expression, red blood cells.

Its function is as follows. Involved in oxygen transport from gills to the various peripheral tissues. The protein is Hemoglobin subunit beta (hbb) of Silurus asotus (Amur catfish).